Consider the following 458-residue polypeptide: Enolase (458 aa).

Residue Gln-177 coordinates (2R)-2-phosphoglycerate. The active-site Proton donor is Glu-219. Mg(2+) is bound by residues Asp-256, Glu-310, and Asp-337. Lys-362, Arg-391, Ser-392, and Lys-413 together coordinate (2R)-2-phosphoglycerate. Lys-362 acts as the Proton acceptor in catalysis.

It belongs to the enolase family. Mg(2+) serves as cofactor.

It localises to the cytoplasm. It is found in the secreted. Its subcellular location is the cell surface. It catalyses the reaction (2R)-2-phosphoglycerate = phosphoenolpyruvate + H2O. It participates in carbohydrate degradation; glycolysis; pyruvate from D-glyceraldehyde 3-phosphate: step 4/5. Functionally, catalyzes the reversible conversion of 2-phosphoglycerate (2-PG) into phosphoenolpyruvate (PEP). It is essential for the degradation of carbohydrates via glycolysis. This Mycoplasma genitalium (strain ATCC 33530 / DSM 19775 / NCTC 10195 / G37) (Mycoplasmoides genitalium) protein is Enolase.